Here is a 433-residue protein sequence, read N- to C-terminus: Glucose-6-phosphate isomerase (433 aa).

E285 serves as the catalytic Proton donor. Catalysis depends on residues H306 and K421.

This sequence belongs to the GPI family.

The protein localises to the cytoplasm. The enzyme catalyses alpha-D-glucose 6-phosphate = beta-D-fructose 6-phosphate. The protein operates within carbohydrate biosynthesis; gluconeogenesis. It functions in the pathway carbohydrate degradation; glycolysis; D-glyceraldehyde 3-phosphate and glycerone phosphate from D-glucose: step 2/4. In terms of biological role, catalyzes the reversible isomerization of glucose-6-phosphate to fructose-6-phosphate. This is Glucose-6-phosphate isomerase from Mycoplasma mobile (strain ATCC 43663 / 163K / NCTC 11711) (Mesomycoplasma mobile).